A 178-amino-acid polypeptide reads, in one-letter code: Platelet inhibitor triplatin-2 (178 aa).

A signal peptide spans 1–18 (MKMIISLTFLGILMLAFA). 3 disulfide bridges follow: Cys25–Cys134, Cys60–Cys178, and Cys90–Cys106.

It belongs to the calycin superfamily. Triabin family. Expressed in salivary glands.

It localises to the secreted. Functionally, inhibits platelet aggregation and vasoconstriction through binding to distinct eicosanoids involved in inflammation (acts as a scavenger), and has a role in inhibiting host innate immunity by impairing platelet-assisted formation of neutrophil extracellular traps (NETs). Inhibits platelet aggregation by collagen, and low doses of thromboxane A2 mimetic (TXA2 mimetic), and arachidonic acid (AA) without affecting aggregation induced by ADP, convulxin (GP6 agonist), and PMA. Binds to TXA2, TXB2, prostaglandine H2 mimetic (PGH2 mimetic), PGJ2, and PGF2alpha. Binding is not observed to leukotrienes, AA, and biogenic amines (PGE1, 5(S)-HETE, 12(S)-HETE, 20-HETE, norepinephrine, epinephrine, serotonin, LTC4 and ADP). Induces relaxation of aorta rat previously contracted with TXA2 mimetic. Moreover, it also impairs platelet-assisted formation of neutrophil extracellular traps (NETs). NETs are web-like structures of DNA and proteins that play an important role in killing of pathogens. In addition, NETs are implicated in thrombus formation. In vivo, this protein exhibits antithrombotic activity in two distinct mice models that are highly dependent on platelets. It is noteworthy that it inhibits thrombosis without promoting excessive bleeding. The protein is Platelet inhibitor triplatin-2 of Triatoma infestans (Assassin bug).